We begin with the raw amino-acid sequence, 1145 residues long: DNA polymerase II large subunit (1145 aa).

The interval 284-303 (KSSSESDEDEETDGKPKIKP) is disordered.

It belongs to the archaeal DNA polymerase II family. As to quaternary structure, heterodimer of a large subunit and a small subunit.

It catalyses the reaction DNA(n) + a 2'-deoxyribonucleoside 5'-triphosphate = DNA(n+1) + diphosphate. It carries out the reaction Exonucleolytic cleavage in the 3'- to 5'-direction to yield nucleoside 5'-phosphates.. Functionally, possesses two activities: a DNA synthesis (polymerase) and an exonucleolytic activity that degrades single-stranded DNA in the 3'- to 5'-direction. Has a template-primer preference which is characteristic of a replicative DNA polymerase. The protein is DNA polymerase II large subunit of Methanococcoides burtonii (strain DSM 6242 / NBRC 107633 / OCM 468 / ACE-M).